A 1060-amino-acid polypeptide reads, in one-letter code: Anoctamin-8 (1060 aa).

The interval 1–32 is disordered; it reads MAEAASGAGDVTLEGERGKRPPPEGEPAAPAS. An N-acetylalanine modification is found at Ala-2. The Cytoplasmic portion of the chain corresponds to 2 to 244; it reads AEAASGAGDV…DDICDYFGVK (243 aa). Basic and acidic residues predominate over residues 14 to 23; sequence EGERGKRPPP. The helical transmembrane segment at 245–265 threads the bilayer; it reads IAMYFAWLGFYTSAMVYPAVF. Residues 266–281 lie on the Extracellular side of the membrane; it reads GSVLYTFTEADQTSRD. A helical membrane pass occupies residues 282 to 302; sequence VSCVVFALFNVIWSTLFLEEW. Residues 303–356 are Cytoplasmic-facing; it reads KRRGAELAYKWGTLDSPGEAVEEPRPQFRGIRRISPITRAEEFYYPPWKRLLFQ. Ser-318 carries the phosphoserine modification. The chain crosses the membrane as a helical span at residues 357 to 377; it reads LLVSLPLCLACLICVFILMLG. The Extracellular portion of the chain corresponds to 378–400; the sequence is CFQLQELVLSVKGLPRLVRFLPK. Residues 401–421 traverse the membrane as a helical segment; that stretch reads VMLALLVSVSAEGYKKLAVWL. Residues 422–437 lie on the Cytoplasmic side of the membrane; the sequence is NDMENYRLESTYERHL. Residues 438-458 traverse the membrane as a helical segment; sequence IIKVVLFQFVNSYLSLFYIGF. Topologically, residues 459–745 are extracellular; it reads YLKDMDRLKE…YEDTFQDYQE (287 aa). 4 disordered regions span residues 529–605, 619–640, 653–672, and 680–723; these read AQAD…SLLD, GAGR…SPTM, AEED…EPQT, and GEGR…HSPQ. Over residues 534 to 547 the composition is skewed to gly residues; that stretch reads GGAGSRRCLGGGCG. Acidic residues-rich tracts occupy residues 549-559 and 581-602; these read PEEENEEEEEA and EEDE…EEGS. Position 665 is a phosphoserine (Ser-665). Residues 680-694 are compositionally biased toward basic and acidic residues; it reads GEGRDQGPDGDRDTE. An N-linked (GlcNAc...) asparagine glycan is attached at Asn-708. The helical transmembrane segment at 746–766 threads the bilayer; it reads MFVQFGYVVLFSSAFPLAALC. Over 767–802 the chain is Cytoplasmic; the sequence is ALVNNLIEIRSDAFKLCTGLQRPFGRRVESIGQWQK. Ser-796 carries the phosphoserine modification. A helical transmembrane segment spans residues 803-823; the sequence is VMEAMGVLAIVVNCYLIGQCG. The Extracellular segment spans residues 824–836; sequence QLQRLFPWLSPEA. A helical transmembrane segment spans residues 837–857; the sequence is AIVSVVVLEHLALLVKYLIHV. Topologically, residues 858–1060 are cytoplasmic; it reads AIPDIPGWVA…PRPEDAGHRP (203 aa). The segment at 884–1060 is disordered; sequence HERQAQQRFQ…PRPEDAGHRP (177 aa). Basic and acidic residues-rich tracts occupy residues 899-927 and 935-950; these read RREE…EARA and VAER…ERPR. Residues 972–986 show a composition bias toward pro residues; the sequence is TRPPAPTGCAPPPRS. Arg-991 is subject to Asymmetric dimethylarginine; alternate. Arg-991 carries the omega-N-methylarginine; alternate modification. Arg-999 bears the Omega-N-methylarginine mark. Residues 1049-1060 show a composition bias toward basic and acidic residues; sequence PEPRPEDAGHRP.

It belongs to the anoctamin family. Predominant expression seen in epithelial tissues.

The protein resides in the cell membrane. Does not exhibit calcium-activated chloride channel (CaCC) activity. The sequence is that of Anoctamin-8 (Ano8) from Mus musculus (Mouse).